A 403-amino-acid chain; its full sequence is Imidazolonepropionase (403 aa).

Residues His-74 and His-76 each coordinate Fe(3+). Residues His-74 and His-76 each coordinate Zn(2+). Positions 83, 146, and 179 each coordinate 4-imidazolone-5-propanoate. Tyr-146 contacts N-formimidoyl-L-glutamate. His-242 serves as a coordination point for Fe(3+). His-242 contributes to the Zn(2+) binding site. Gln-245 contacts 4-imidazolone-5-propanoate. A Fe(3+)-binding site is contributed by Asp-317. A Zn(2+)-binding site is contributed by Asp-317. Residues Asn-319 and Gly-321 each contribute to the N-formimidoyl-L-glutamate site. Thr-322 lines the 4-imidazolone-5-propanoate pocket.

It belongs to the metallo-dependent hydrolases superfamily. HutI family. Zn(2+) is required as a cofactor. Fe(3+) serves as cofactor.

It localises to the cytoplasm. It carries out the reaction 4-imidazolone-5-propanoate + H2O = N-formimidoyl-L-glutamate. Its pathway is amino-acid degradation; L-histidine degradation into L-glutamate; N-formimidoyl-L-glutamate from L-histidine: step 3/3. Functionally, catalyzes the hydrolytic cleavage of the carbon-nitrogen bond in imidazolone-5-propanoate to yield N-formimidoyl-L-glutamate. It is the third step in the universal histidine degradation pathway. This is Imidazolonepropionase from Sphingopyxis alaskensis (strain DSM 13593 / LMG 18877 / RB2256) (Sphingomonas alaskensis).